Reading from the N-terminus, the 495-residue chain is Meiosis-specific nuclear structural protein 1 (495 aa).

Residues 1–315 (MASIRRTLSF…RLEEMLRQRE (315 aa)) are interaction with BBOF1. Coiled-coil stretches lie at residues 61–215 (QDEQ…EKLM) and 245–361 (IEEF…QMAL). The segment at 172 to 199 (EESAAEDKRNQAKAQYSHDLEKQLEEQG) is disordered.

It belongs to the MNS1 family. Able to form oligomers. Microtubule inner protein component of sperm flagellar doublet microtubules. Interacts with ODAD1. Interacts with BBOF1. In terms of tissue distribution, expressed in trachea multiciliated cells.

It is found in the nucleus. It localises to the cytoplasm. The protein resides in the cytoskeleton. Its subcellular location is the cilium axoneme. The protein localises to the flagellum axoneme. In terms of biological role, microtubule inner protein (MIP) part of the dynein-decorated doublet microtubules (DMTs) in cilia axoneme, which is required for motile cilia beating. May play a role in the control of meiotic division and germ cell differentiation through regulation of pairing and recombination during meiosis. Required for sperm flagella assembly. May play a role in the assembly and function of the outer dynein arm-docking complex (ODA-DC). ODA-DC mediates outer dynein arms (ODA) binding onto the axonemal doublet microtubules. The protein is Meiosis-specific nuclear structural protein 1 (MNS1) of Bos taurus (Bovine).